The following is a 305-amino-acid chain: Aspartate carbamoyltransferase catalytic subunit (305 aa).

2 residues coordinate carbamoyl phosphate: Arg56 and Thr57. Residue Lys85 coordinates L-aspartate. The carbamoyl phosphate site is built by Arg106, His134, and Gln137. The L-aspartate site is built by Arg167 and Arg227. Carbamoyl phosphate-binding residues include Leu266 and Pro267.

It belongs to the aspartate/ornithine carbamoyltransferase superfamily. ATCase family. In terms of assembly, heterooligomer of catalytic and regulatory chains.

It carries out the reaction carbamoyl phosphate + L-aspartate = N-carbamoyl-L-aspartate + phosphate + H(+). The protein operates within pyrimidine metabolism; UMP biosynthesis via de novo pathway; (S)-dihydroorotate from bicarbonate: step 2/3. Its function is as follows. Catalyzes the condensation of carbamoyl phosphate and aspartate to form carbamoyl aspartate and inorganic phosphate, the committed step in the de novo pyrimidine nucleotide biosynthesis pathway. The protein is Aspartate carbamoyltransferase catalytic subunit of Thermoplasma acidophilum (strain ATCC 25905 / DSM 1728 / JCM 9062 / NBRC 15155 / AMRC-C165).